Consider the following 145-residue polypeptide: Hemoglobin subunit beta-3 (145 aa).

The Globin domain maps to 1–145 (MLTAEEKAAV…VANALAHRYH (145 aa)). A Phosphothreonine modification is found at threonine 11. The residue at position 58 (lysine 58) is an N6-acetyllysine. Histidine 62 provides a ligand contact to heme b. Lysine 81 is subject to N6-acetyllysine. Histidine 91 provides a ligand contact to heme b. An S-nitrosocysteine modification is found at cysteine 92.

Belongs to the globin family. In terms of assembly, heterotetramer of two alpha chains and two beta chains. As to expression, red blood cells.

Involved in oxygen transport from the lung to the various peripheral tissues. The chain is Hemoglobin subunit beta-3 (HBB) from Odocoileus virginianus virginianus (Virginia white-tailed deer).